A 260-amino-acid polypeptide reads, in one-letter code: Hydroxyacylglutathione hydrolase (260 aa).

Residues histidine 55, histidine 57, aspartate 59, histidine 60, histidine 116, aspartate 133, and histidine 171 each contribute to the Zn(2+) site.

This sequence belongs to the metallo-beta-lactamase superfamily. Glyoxalase II family. Monomer. The cofactor is Zn(2+).

It catalyses the reaction an S-(2-hydroxyacyl)glutathione + H2O = a 2-hydroxy carboxylate + glutathione + H(+). The protein operates within secondary metabolite metabolism; methylglyoxal degradation; (R)-lactate from methylglyoxal: step 2/2. Its function is as follows. Thiolesterase that catalyzes the hydrolysis of S-D-lactoyl-glutathione to form glutathione and D-lactic acid. This chain is Hydroxyacylglutathione hydrolase, found in Shewanella loihica (strain ATCC BAA-1088 / PV-4).